The chain runs to 194 residues: NADH-quinone oxidoreductase subunit B (194 aa).

Residues cysteine 73, cysteine 74, cysteine 138, and cysteine 168 each coordinate [4Fe-4S] cluster.

It belongs to the complex I 20 kDa subunit family. As to quaternary structure, NDH-1 is composed of 14 different subunits. Subunits NuoB, C, D, E, F, and G constitute the peripheral sector of the complex. [4Fe-4S] cluster is required as a cofactor.

Its subcellular location is the cell inner membrane. It carries out the reaction a quinone + NADH + 5 H(+)(in) = a quinol + NAD(+) + 4 H(+)(out). In terms of biological role, NDH-1 shuttles electrons from NADH, via FMN and iron-sulfur (Fe-S) centers, to quinones in the respiratory chain. The immediate electron acceptor for the enzyme in this species is believed to be ubiquinone. Couples the redox reaction to proton translocation (for every two electrons transferred, four hydrogen ions are translocated across the cytoplasmic membrane), and thus conserves the redox energy in a proton gradient. The sequence is that of NADH-quinone oxidoreductase subunit B from Bradyrhizobium sp. (strain BTAi1 / ATCC BAA-1182).